Consider the following 108-residue polypeptide: UPF0145 protein alr2488 (108 aa).

This sequence belongs to the UPF0145 family.

This is UPF0145 protein alr2488 from Nostoc sp. (strain PCC 7120 / SAG 25.82 / UTEX 2576).